The primary structure comprises 231 residues: Adenosylcobinamide-GDP ribazoletransferase (231 aa).

A run of 6 helical transmembrane segments spans residues leucine 24–leucine 44, leucine 46–leucine 66, isoleucine 96–leucine 116, leucine 159–phenylalanine 176, leucine 181–leucine 198, and leucine 209–tryptophan 229.

Belongs to the CobS family. Requires Mg(2+) as cofactor.

It is found in the cell membrane. It carries out the reaction alpha-ribazole + adenosylcob(III)inamide-GDP = adenosylcob(III)alamin + GMP + H(+). It catalyses the reaction alpha-ribazole 5'-phosphate + adenosylcob(III)inamide-GDP = adenosylcob(III)alamin 5'-phosphate + GMP + H(+). It functions in the pathway cofactor biosynthesis; adenosylcobalamin biosynthesis; adenosylcobalamin from cob(II)yrinate a,c-diamide: step 7/7. Functionally, joins adenosylcobinamide-GDP and alpha-ribazole to generate adenosylcobalamin (Ado-cobalamin). Also synthesizes adenosylcobalamin 5'-phosphate from adenosylcobinamide-GDP and alpha-ribazole 5'-phosphate. The chain is Adenosylcobinamide-GDP ribazoletransferase from Thermococcus kodakarensis (strain ATCC BAA-918 / JCM 12380 / KOD1) (Pyrococcus kodakaraensis (strain KOD1)).